Here is a 482-residue protein sequence, read N- to C-terminus: Zinc metalloproteinase/disintegrin (482 aa).

An N-terminal signal peptide occupies residues 1-20 (MIQVLLVTICLAAFPYQGSS). Positions 21 to 189 (MILESGNVND…IKASQLVVTA (169 aa)) are excised as a propeptide. One can recognise a Peptidase M12B domain in the interval 197-393 (RYIELVVVAD…HNPQCILNEP (197 aa)). Residues glutamate 200 and aspartate 284 each coordinate Ca(2+). Cystine bridges form between cysteine 308-cysteine 388 and cysteine 348-cysteine 372. Histidine 333 is a binding site for Zn(2+). Glutamate 334 is an active-site residue. Histidine 337 and histidine 343 together coordinate Zn(2+). The Ca(2+) site is built by cysteine 388 and asparagine 391. Positions 394–409 (LRTDTVSTPVSGNELL) are excised as a propeptide. Residues 401 to 482 (TPVSGNELLE…AGCPRNPFHA (82 aa)) form the Disintegrin domain. Disulfide bonds link cysteine 415/cysteine 430, cysteine 417/cysteine 425, cysteine 424/cysteine 447, cysteine 438/cysteine 444, cysteine 443/cysteine 468, and cysteine 456/cysteine 475. Residues 460–462 (RGD) carry the Cell attachment site motif.

Belongs to the venom metalloproteinase (M12B) family. P-II subfamily. P-IId sub-subfamily. In terms of assembly, homodimer; disulfide-linked (disintegrin). It depends on Zn(2+) as a cofactor. As to expression, expressed by the venom gland.

The protein localises to the secreted. This recombinant protein hydrolyzes fibronectin, but has no effect on type I gelatin and type I to V collagens. Selectively hydrolyzes the Aalpha-chain of fibrinogen (FGA), but has no effect on fibrin. In terms of biological role, inhibits ADP-induced platelet aggregation. Its function is as follows. Recombinant metalloproteinase-disintegrin Mt-d-I (393-408): hydrolyzes type I gelatin, type III and V collagens, but has no effect on type I, II, IV collagens and fibronectin. Selectively hydrolyzes the Aalpha-chain of fibrinogen, but has no effect on fibrin. May induce hemorrhage in vascular tissue. Strongly inhibits ADP-induced platelet aggregation. When concentrated, Mt-d-I undergoes autoproteolytic processing into metalloproteinase and disintegrin. This chain is Zinc metalloproteinase/disintegrin, found in Gloydius brevicauda (Korean slamosa snake).